The primary structure comprises 440 residues: uncharacterized protein (440 aa).

A run of 10 helical transmembrane segments spans residues 1-21 (MLLV…QLYR), 29-49 (TVFI…SAFE), 70-90 (LLQM…IARI), 101-121 (VGVL…GIAM), 179-199 (TSII…LSLG), 226-246 (FVIR…AATS), 258-278 (IVAS…LLFF), 343-363 (IYPA…PFSF), 366-386 (ILTL…VGGG), and 389-409 (FAAI…GLLI).

This sequence belongs to the dicarboxylate/amino acid:cation symporter (DAACS) (TC 2.A.23) family.

It localises to the cell membrane. This is an uncharacterized protein from Haemophilus influenzae (strain ATCC 51907 / DSM 11121 / KW20 / Rd).